The following is a 356-amino-acid chain: Glutamine synthetase nodule isozyme (356 aa).

A GS beta-grasp domain is found at 19 to 99 (IIAEYIWVGG…VICDVYTPAG (81 aa)). The 251-residue stretch at 106–356 (KRHNAAKIFS…IAETTLLWKP (251 aa)) folds into the GS catalytic domain.

This sequence belongs to the glutamine synthetase family. Homooctamer. Found at highest levels in root nodules.

Its subcellular location is the cytoplasm. The catalysed reaction is L-glutamate + NH4(+) + ATP = L-glutamine + ADP + phosphate + H(+). The polypeptide is Glutamine synthetase nodule isozyme (GS1) (Medicago sativa (Alfalfa)).